The following is a 368-amino-acid chain: Flagellar P-ring protein (368 aa).

A signal peptide spans M1–A24.

Belongs to the FlgI family. As to quaternary structure, the basal body constitutes a major portion of the flagellar organelle and consists of four rings (L,P,S, and M) mounted on a central rod.

Its subcellular location is the periplasm. It localises to the bacterial flagellum basal body. In terms of biological role, assembles around the rod to form the L-ring and probably protects the motor/basal body from shearing forces during rotation. In Geobacter sulfurreducens (strain ATCC 51573 / DSM 12127 / PCA), this protein is Flagellar P-ring protein.